Here is a 277-residue protein sequence, read N- to C-terminus: Urease accessory protein UreD (277 aa).

It belongs to the UreD family. In terms of assembly, ureD, UreF and UreG form a complex that acts as a GTP-hydrolysis-dependent molecular chaperone, activating the urease apoprotein by helping to assemble the nickel containing metallocenter of UreC. The UreE protein probably delivers the nickel.

It localises to the cytoplasm. Required for maturation of urease via the functional incorporation of the urease nickel metallocenter. This is Urease accessory protein UreD from Sinorhizobium medicae (strain WSM419) (Ensifer medicae).